The following is a 363-amino-acid chain: Ribosomal RNA large subunit methyltransferase M (363 aa).

S-adenosyl-L-methionine-binding positions include serine 194, cysteine 227–glycine 230, aspartate 246, aspartate 266, and aspartate 284. Lysine 313 (proton acceptor) is an active-site residue.

This sequence belongs to the class I-like SAM-binding methyltransferase superfamily. RNA methyltransferase RlmE family. RlmM subfamily. In terms of assembly, monomer.

It localises to the cytoplasm. The enzyme catalyses cytidine(2498) in 23S rRNA + S-adenosyl-L-methionine = 2'-O-methylcytidine(2498) in 23S rRNA + S-adenosyl-L-homocysteine + H(+). In terms of biological role, catalyzes the 2'-O-methylation at nucleotide C2498 in 23S rRNA. This is Ribosomal RNA large subunit methyltransferase M from Haemophilus influenzae (strain PittGG).